The primary structure comprises 362 residues: Phosphoserine aminotransferase (362 aa).

Residues serine 9 and arginine 42 each coordinate L-glutamate. Residues 76–77, tryptophan 102, threonine 153, aspartate 174, and glutamine 197 contribute to the pyridoxal 5'-phosphate site; that span reads GR. Position 198 is an N6-(pyridoxal phosphate)lysine (lysine 198). 239–240 provides a ligand contact to pyridoxal 5'-phosphate; the sequence is NT.

It belongs to the class-V pyridoxal-phosphate-dependent aminotransferase family. SerC subfamily. As to quaternary structure, homodimer. It depends on pyridoxal 5'-phosphate as a cofactor.

Its subcellular location is the cytoplasm. It catalyses the reaction O-phospho-L-serine + 2-oxoglutarate = 3-phosphooxypyruvate + L-glutamate. The enzyme catalyses 4-(phosphooxy)-L-threonine + 2-oxoglutarate = (R)-3-hydroxy-2-oxo-4-phosphooxybutanoate + L-glutamate. It functions in the pathway amino-acid biosynthesis; L-serine biosynthesis; L-serine from 3-phospho-D-glycerate: step 2/3. The protein operates within cofactor biosynthesis; pyridoxine 5'-phosphate biosynthesis; pyridoxine 5'-phosphate from D-erythrose 4-phosphate: step 3/5. Catalyzes the reversible conversion of 3-phosphohydroxypyruvate to phosphoserine and of 3-hydroxy-2-oxo-4-phosphonooxybutanoate to phosphohydroxythreonine. The chain is Phosphoserine aminotransferase from Citrobacter koseri (strain ATCC BAA-895 / CDC 4225-83 / SGSC4696).